A 1663-amino-acid polypeptide reads, in one-letter code: Cortactin-binding protein 2 (1663 aa).

Disordered regions lie at residues 1-23 (MATD…AGAA), 203-222 (KKKT…RSTE), 352-440 (ARPG…LHPG), 454-478 (GNAN…SPTS), and 498-616 (RFTS…PKPS). Residues 119–276 (KKMQERMSAQ…EQLKRGSDSK (158 aa)) adopt a coiled-coil conformation. Residues 384 to 396 (NGPSTGSTPDPTS) are compositionally biased toward low complexity. The segment covering 411–422 (QTPGIAPQNSQA) has biased composition (polar residues). The residue at position 498 (arginine 498) is an Asymmetric dimethylarginine. Polar residues predominate over residues 583–593 (TVASPPSSLPQ). ANK repeat units follow at residues 709 to 739 (GRPT…DINY), 743 to 772 (DGHS…QVNA), 776 to 805 (NGFT…NINH), 809 to 838 (GGQT…NRSV), and 842 to 871 (DGWT…LARG). The tract at residues 876 to 897 (EEGSESSVFDLDGGEESPEGIS) is disordered. The stretch at 912–942 (EGWTAAHIAASKGFKNCLEILCRHGGLEPER) is one ANK 6 repeat. The segment at 1446–1485 (NKKKGESGAWRKVNTSPRRKSGRFSLPTWNKPDLSTEGMK) is disordered. Position 1524 is a phosphoserine (serine 1524). Disordered stretches follow at residues 1580–1602 (SQKE…KSKT) and 1615–1663 (VPRS…KPNK). A compositionally biased stretch (polar residues) spans 1582-1599 (KEVSPLSSHQTTECSNSK). Positions 1624-1638 (SQNTKRSSSSSNTRQ) are enriched in low complexity. Residues 1645-1663 (SKEENWNLHKNEHLEKPNK) are compositionally biased toward basic and acidic residues.

As to quaternary structure, interacts with CTTN/cortactin SH3 domain. Interacts with STRN, STRN4/zinedin and MOB4/phocein; this interactions mediate the association with the STRIPAK core complex and may regulate dendritic spine distribution of the STRIPAK complex in hippocampal neurons. Activation of glutamate receptors weakens the interaction with STRN and STRN4.

The protein resides in the cytoplasm. Its subcellular location is the cell cortex. It is found in the cell projection. It localises to the dendritic spine. In terms of biological role, regulates the dendritic spine distribution of CTTN/cortactin in hippocampal neurons, and thus controls dendritic spinogenesis and dendritic spine maintenance. Associates with the striatin-interacting phosphatase and kinase (STRIPAK) core complex to regulate dendritic spine distribution of the STRIPAK complex in hippocampal neurons. This Nomascus leucogenys (Northern white-cheeked gibbon) protein is Cortactin-binding protein 2 (CTTNBP2).